The primary structure comprises 422 residues: uncharacterized protein (422 aa).

The next 12 membrane-spanning stretches (helical) occupy residues 23-43 (IVKI…LIYD), 47-67 (AIGT…LAPV), 90-110 (AIVL…WFVM), 112-132 (LMIV…ALIP), 151-171 (AQIV…FISP), 172-192 (SYTM…VLFI), 228-248 (ILYP…PWEA), 263-283 (IVYS…GFVL), 291-308 (YGLL…AFFI), 318-340 (VFFA…YTII), 352-372 (VYAV…VICG), and 381-401 (GKVI…ILLF).

This sequence belongs to the major facilitator superfamily.

It is found in the cell membrane. This is an uncharacterized protein from Bacillus subtilis (strain 168).